The sequence spans 3323 residues: Mucin-3A (3323 aa).

The N-terminal stretch at 1–15 (MQLLGLLGLLWMLKA) is a signal peptide. 15 disordered regions span residues 218 to 243 (TISS…TSPT), 270 to 289 (TSMT…SSPT), 325 to 345 (ISRS…STVT), 359 to 380 (GTLS…TETA), 539 to 677 (MSAS…PSTE), 700 to 722 (NASS…GTNS), 734 to 756 (ETSS…KTAK), 909 to 991 (SFSS…TLTP), 1170 to 1201 (ISSA…TTPT), 1318 to 1356 (AESA…FPSS), 1380 to 1442 (AMTS…TNPV), 1484 to 1509 (TMTE…ETAK), 1714 to 1746 (TPSS…TPTS), 1793 to 1844 (FTSS…YPTS), and 1900 to 2056 (TSHS…SHST). Residues 270–284 (TSMTTTASQPTATNT) are compositionally biased toward low complexity. A compositionally biased stretch (polar residues) spans 545-563 (GTTHTESISSPPASTSTLH). Over residues 564–618 (TTAESTLAPTTTTSFTTSTTMEPPSTTAATTGTGQTTFTSSTATFPETTTPTPTT) the composition is skewed to low complexity. Positions 619–629 (DMSTESLTTAM) are enriched in polar residues. Residues 630–676 (TSPPITSSVTSTNTVTSMTTTTSPPTTTNSFTSLTSMPLSSTPVPST) are compositionally biased toward low complexity. Residues 700 to 721 (NASSMTTSETTYPNSPTGPGTN) are compositionally biased toward polar residues. A compositionally biased stretch (low complexity) spans 909–918 (SFSSSMSESS). Over residues 919–932 (AGTTHTESISSPRG) the composition is skewed to polar residues. Residues 933-991 (TTSTLHTTVESTPSPTTTTSFTTSTMMEPPSSTVSTTGRGQTTFPSSTATFPETTTLTP) show a composition bias toward low complexity. Residues 1324 to 1356 (PTTTTSFTTSPTMEPPSTTVATTGTGQTTFPSS) show a composition bias toward low complexity. Tandem repeats lie at residues 1893–1910 (VTTT…FTSS), 1911–1927 (IATT…FTSS), 1928–1944 (ITTT…FTSS), 1945–1961 (ITNT…FTSS), 1962–1978 (ITTT…LTSS), 1979–1995 (ITTT…YTSL), 1996–2012 (ITTT…FTSS), 2013–2029 (ITTT…LTSS), 2030–2046 (ITTT…FTSS), 2047–2062 (ITTE…FTSL), 2063–2079 (ITIT…YTTS), 2080–2096 (ITTT…FTSS), 2097–2113 (ITTT…FTSS), 2114–2130 (ITTS…FTSS), 2131–2147 (ITTT…FTSS), 2148–2164 (ITTT…FTSL), 2165–2191 (ITTT…FTSS), 2192–2208 (NTIT…YITS), 2209–2225 (ITTT…FSSS), 2226–2242 (ITTT…FTSS), 2243–2259 (ITTT…FTSS), 2260–2276 (ITTT…FTSS), 2277–2293 (ITTS…STSL), 2294–2310 (ITTT…FTSS), 2311–2327 (ITTT…FTSS), 2328–2344 (ITTT…FTSS), 2345–2361 (ITTT…FTSS), 2362–2378 (ITTT…FSSS), 2379–2395 (ITTT…LTSW), 2396–2412 (VTTT…LTSS), 2413–2429 (ITTT…FTSS), and 2430–2446 (ITTT…LSSS). The 32 X approximate tandem repeats, Ser/Thr-rich stretch occupies residues 1893 to 2446 (VTTTTKITSH…SESTPSLSSS (554 aa)). Polar residues predominate over residues 1907 to 1947 (FTSSIATTETPSHSTPRFTSSITTTETPSHSTPRFTSSITN). Residues 1948 to 2056 (TKTTSHSSPS…ITTETTSHST (109 aa)) show a composition bias toward low complexity. 4 stretches are compositionally biased toward low complexity: residues 2100–2170 (TETT…TTET), 2177–2384 (TTET…TTET), 2393–2447 (TSWV…SSST), and 2464–2507 (TTSE…TTTT). 6 disordered regions span residues 2100–2447 (TETT…SSST), 2464–2508 (TTSE…TTTD), 2578–2608 (TQTP…DSST), 2631–2656 (IPST…TSTS), 2834–2858 (MMPE…VPTN), and 2897–2937 (SSLP…TSRR). Residues 2578–2602 (TQTPPVLTSATGTQTSPAPTTVTFG) are compositionally biased toward polar residues. 3 stretches are compositionally biased toward low complexity: residues 2633 to 2656 (STHS…TSTS), 2834 to 2849 (MMPE…ASSS), and 2905 to 2937 (TSSK…TSRR). One can recognise an EGF-like domain in the interval 2976–3009 (SGDRCQLQTRCQNGGQWDGLKCQCPSTFYGSSCE). Cystine bridges form between cysteine 2980–cysteine 2986 and cysteine 2999–cysteine 3008. An SEA domain is found at 3018–3143 (DVVETEVGME…DSIKVNNNSK (126 aa)). The chain crosses the membrane as a helical span at residues 3227–3247 (LVGGLTAGAALLVLLLLALGV).

Highly O-glycosylated and probably also N-glycosylated. Broad specificity; small intestine, colon, colonic tumors, heart, liver, thymus, prostate, pancreas and gall bladder.

Its subcellular location is the membrane. The protein resides in the secreted. Its function is as follows. Major glycoprotein component of a variety of mucus gels. Thought to provide a protective, lubricating barrier against particles and infectious agents at mucosal surfaces. May be involved in ligand binding and intracellular signaling. The protein is Mucin-3A of Homo sapiens (Human).